Reading from the N-terminus, the 133-residue chain is Fluoride-specific ion channel FluC (133 aa).

4 helical membrane-spanning segments follow: residues A3–L23, W41–V61, I76–F96, and L103–G123. Positions 81 and 84 each coordinate Na(+).

This sequence belongs to the fluoride channel Fluc/FEX (TC 1.A.43) family.

Its subcellular location is the cell inner membrane. It catalyses the reaction fluoride(in) = fluoride(out). Na(+) is not transported, but it plays an essential structural role and its presence is essential for fluoride channel function. In terms of biological role, fluoride-specific ion channel. Important for reducing fluoride concentration in the cell, thus reducing its toxicity. The chain is Fluoride-specific ion channel FluC from Xylella fastidiosa (strain M23).